Reading from the N-terminus, the 119-residue chain is Beta-2-microglobulin (119 aa).

The signal sequence occupies residues 1 to 20 (MARFVVVALLVQLSLFGLEA). Residues 25–114 (PKIQVYSRYP…VTFSTPKTVK (90 aa)) enclose the Ig-like C1-type domain. The cysteines at positions 45 and 100 are disulfide-linked.

It belongs to the beta-2-microglobulin family. As to quaternary structure, heterodimer of an alpha chain and a beta chain. Beta-2-microglobulin is the beta-chain of major histocompatibility complex class I molecules.

The protein localises to the secreted. Functionally, component of the class I major histocompatibility complex (MHC). Involved in the presentation of peptide antigens to the immune system. This chain is Beta-2-microglobulin (B2M), found in Saguinus imperator (Emperor tamarin).